A 237-amino-acid chain; its full sequence is Neural retina-specific leucine zipper protein (237 aa).

Residues lysine 20 and lysine 24 each participate in a glycyl lysine isopeptide (Lys-Gly) (interchain with G-Cter in SUMO) cross-link. The disordered stretch occupies residues 26-64; the sequence is EPSEGRSGVPTASLGSTPYSSVPPSPTFSEPGMVGGGEA. The interval 30–93 is minimal transactivation domain (MTD); that stretch reads GRSGVPTASL…SDEVLGLSPD (64 aa). Residues 159 to 185 form a basic motif region; sequence RLKQRRRTLKNRGYAQACRSKRLQQRR. The bZIP domain maps to 159–222; the sequence is RLKQRRRTLK…DLYKARCDRL (64 aa). Residues 187-208 are leucine-zipper; the sequence is LEAERARLAAQLDALRAEVARL.

Belongs to the bZIP family. In terms of assembly, interacts with FIZ1; this interaction represses transactivation. Interacts (via the leucine-zipper domain) with CRX. Post-translationally, disumoylated at Lys-20. Sumoylation modulates the transcriptional activity of NRL on RHO and NR2E3 promoters, and is required for normal rod differentiation. In terms of processing, phosphorylated. Expressed in the retina (at protein level).

The protein resides in the cytoplasm. It localises to the nucleus. Functionally, acts as a transcriptional activator which regulates the expression of several rod-specific genes, including RHO and PDE6B. Also functions as a transcriptional coactivator, stimulating transcription mediated by the transcription factor CRX and NR2E3. Binds to the rhodopsin promoter in a sequence-specific manner. The protein is Neural retina-specific leucine zipper protein (Nrl) of Mus musculus (Mouse).